We begin with the raw amino-acid sequence, 298 residues long: Probable 2-(5''-triphosphoribosyl)-3'-dephosphocoenzyme-A synthase 2 (298 aa).

Belongs to the CitG/MdcB family.

It carries out the reaction 3'-dephospho-CoA + ATP = 2'-(5''-triphospho-alpha-D-ribosyl)-3'-dephospho-CoA + adenine. The protein is Probable 2-(5''-triphosphoribosyl)-3'-dephosphocoenzyme-A synthase 2 of Salmonella paratyphi A (strain ATCC 9150 / SARB42).